A 235-amino-acid polypeptide reads, in one-letter code: Large ribosomal subunit protein uL1 (235 aa).

It belongs to the universal ribosomal protein uL1 family. As to quaternary structure, part of the 50S ribosomal subunit.

Binds directly to 23S rRNA. The L1 stalk is quite mobile in the ribosome, and is involved in E site tRNA release. In terms of biological role, protein L1 is also a translational repressor protein, it controls the translation of the L11 operon by binding to its mRNA. This chain is Large ribosomal subunit protein uL1, found in Prochlorococcus marinus (strain MIT 9312).